A 115-amino-acid chain; its full sequence is MNMLLVIAVNTILSLILITVAFWLPQLNIYTEKANPYECGFDPMSSARLPFSMKFFLVAITFLLFDLEIALLLPIPWAIQTPHINMVLPTALILLTILALGLAYEWLQKGLEWTE.

Helical transmembrane passes span L4 to L24, F55 to I75, and I84 to Y104.

It belongs to the complex I subunit 3 family. As to quaternary structure, core subunit of respiratory chain NADH dehydrogenase (Complex I) which is composed of 45 different subunits. Interacts with TMEM186. Interacts with TMEM242.

The protein localises to the mitochondrion inner membrane. It catalyses the reaction a ubiquinone + NADH + 5 H(+)(in) = a ubiquinol + NAD(+) + 4 H(+)(out). Core subunit of the mitochondrial membrane respiratory chain NADH dehydrogenase (Complex I) which catalyzes electron transfer from NADH through the respiratory chain, using ubiquinone as an electron acceptor. Essential for the catalytic activity of complex I. The sequence is that of NADH-ubiquinone oxidoreductase chain 3 from Ochrotomys nuttalli (Golden mouse).